The primary structure comprises 476 residues: Transcription factor EB (476 aa).

Disordered stretches follow at residues 1 to 66 (MASR…PPVP) and 107 to 142 (HISP…APNS). An interaction with ACSS2 region spans residues 1–167 (MASRIGLRMQ…DDVIDNIMRL (167 aa)). Positions 26 to 44 (QQQAVMHYMQQQQQQQQQQ) are enriched in low complexity. 4 positions are modified to phosphoserine: Ser-109, Ser-114, Ser-122, and Ser-138. Low complexity predominate over residues 132–142 (SSSAGNSAPNS). A Nuclear export signal motif is present at residues 136-153 (GNSAPNSPMAMLHIGSNP). At Ser-142 the chain carries Phosphoserine; by MTOR. A strong transcription activation domain region spans residues 156–165 (ELDDVIDNIM). A Phosphothreonine modification is found at Thr-183. Residue Ser-211 is modified to Phosphoserine; by MTOR. Cys-212 is modified (S-(2,3-dicarboxypropyl)cysteine). The region spanning 235 to 288 (QKKDNHNLIERRRRFNINDRIKELGMLIPKANDLDVRWNKGTILKASVDYIRRM) is the bHLH domain. The short motif at 245–248 (RRRR) is the Nuclear localization signal element. A leucine-zipper region spans residues 298 to 319 (LENHSRRLEMTNKQLWLRIQEL). At Ser-332 the chain carries Phosphoserine. A disordered region spans residues 349 to 430 (ELPSEEGPGE…HGSPFPSLSK (82 aa)). A compositionally biased stretch (pro residues) spans 369-390 (PEPLPALPPQAPLPLPTQPPSP). Phosphoserine occurs at positions 423, 441, 466, 467, and 469. Low complexity predominate over residues 447–469 (SDPLLSTMSPEASKASSRRSSFS). The disordered stretch occupies residues 447-476 (SDPLLSTMSPEASKASSRRSSFSMEEGDVL).

The protein belongs to the MiT/TFE family. As to quaternary structure, homodimer and heterodimer; with TFE3 or MITF. Interacts (when phosphorylated by MTOR) with YWHAZ; promoting retention in the cytosol. Interacts with IRGM; promoting association between TFEB and PPP3CB and dephosphorylation. Interacts with small GTPases Rag (RagA/RRAGA, RagB/RRAGB, RagC/RRAGC and/or RagD/RRAGD); promoting its recruitment to lysosomal membrane in the presence of nutrients. Interacts with ACSS2. Post-translationally, phosphorylation at Ser-211 by MTOR via non-canonical mTORC1 pathway regulates its subcellular location and activity. When nutrients are present, phosphorylation by MTOR promotes association with 14-3-3/YWHA adapters and retention in the cytosol. Inhibition of mTORC1, starvation and lysosomal disruption, promotes dephosphorylation by calcineurin PPP3CB and translocation to the nucleus. Dephosphorylated by calcineurin PPP3CB in response to lysosomal Ca(2+) release. IRGM promotes dephosphorylation by calcineurin PPP3CB, resulting in TFEB nuclear translocation and stimulation of lysosomal biogenesis. Dephosphorylated by phosphatase PPP3CA following Coxsackievirus B3 infection, leading to nuclear translocation. Exported from the nucleus in a mTORC1-dependent manner in response to nutrient availability. In terms of processing, alkylated via a non-enzymatic covalent modification. Itaconate, an anti-inflammatory metabolite generated in response to lipopolysaccharide, alkylates Cys-212, preventing association with 14-3-3/YWHA adapters, thereby promoting nuclear translocation and activity. Sumoylated; does not affect dimerization with MITF. Post-translationally, (Microbial infection) Cleavage by Coxsackievirus B3 protease 3C after site Gln-60. This non-phosphorylated cleavage product retains its ability to interact with TFEB, TFE3 or MITF and presents impaired transcriptional activity, resulting in disruption of lysosomal functions and increased viral infection.

The protein localises to the nucleus. Its subcellular location is the cytoplasm. It localises to the cytosol. The protein resides in the lysosome membrane. Inhibited by eltrombopag drug, which binds to the bHLH domain and disrupts DNA-binding. Transcription factor that acts as a master regulator of lysosomal biogenesis, autophagy, lysosomal exocytosis, lipid catabolism, energy metabolism and immune response. Specifically recognizes and binds E-box sequences (5'-CANNTG-3'); efficient DNA-binding requires dimerization with itself or with another MiT/TFE family member such as TFE3 or MITF. Involved in the cellular response to amino acid availability by acting downstream of MTOR: in the presence of nutrients, TFEB phosphorylation by MTOR promotes its cytosolic retention and subsequent inactivation. Upon starvation or lysosomal stress, inhibition of MTOR induces TFEB dephosphorylation, resulting in nuclear localization and transcription factor activity. Specifically recognizes and binds the CLEAR-box sequence (5'-GTCACGTGAC-3') present in the regulatory region of many lysosomal genes, leading to activate their expression, thereby playing a central role in expression of lysosomal genes. Regulates lysosomal positioning in response to nutrient deprivation by promoting the expression of PIP4P1. Acts as a positive regulator of autophagy by promoting expression of genes involved in autophagy. In association with TFE3, activates the expression of CD40L in T-cells, thereby playing a role in T-cell-dependent antibody responses in activated CD4(+) T-cells and thymus-dependent humoral immunity. Specifically recognizes the gamma-E3 box, a subset of E-boxes, present in the heavy-chain immunoglobulin enhancer. Plays a role in the signal transduction processes required for normal vascularization of the placenta. Involved in the immune response to infection by the bacteria S.aureus, S.typhimurium or S.enterica: infection promotes itaconate production, leading to alkylation, resulting in nuclear localization and transcription factor activity. Itaconate-mediated alkylation activates TFEB-dependent lysosomal biogenesis, facilitating the bacteria clearance during the antibacterial innate immune response. In association with ACSS2, promotes the expression of genes involved in lysosome biogenesis and both autophagy upon glucose deprivation. This Homo sapiens (Human) protein is Transcription factor EB.